Here is a 185-residue protein sequence, read N- to C-terminus: Small ribosomal subunit protein uS5 (185 aa).

The region spanning 18–81 (FVDKLVHINR…ESAKRALIRV (64 aa)) is the S5 DRBM domain.

The protein belongs to the universal ribosomal protein uS5 family. As to quaternary structure, part of the 30S ribosomal subunit. Contacts proteins S4 and S8.

Its function is as follows. With S4 and S12 plays an important role in translational accuracy. Located at the back of the 30S subunit body where it stabilizes the conformation of the head with respect to the body. The protein is Small ribosomal subunit protein uS5 of Azorhizobium caulinodans (strain ATCC 43989 / DSM 5975 / JCM 20966 / LMG 6465 / NBRC 14845 / NCIMB 13405 / ORS 571).